The primary structure comprises 324 residues: Taste receptor type 2 member 116 (324 aa).

Over 1 to 2 the chain is Extracellular; it reads MN. The helical transmembrane segment at 3–23 threads the bilayer; sequence GVLYITFTVILSVEVIIGNFG. Over 24–55 the chain is Cytoplasmic; the sequence is NGIIALVNIMDLAKRRKISSVDQILTALAISR. Residues 56–76 traverse the membrane as a helical segment; that stretch reads IVLLWLVLVSWWLSMFYPGQW. Residues 77–94 are Extracellular-facing; the sequence is MTEGIDVIVHNVWTTLNQ. A helical membrane pass occupies residues 95–115; it reads ISLWLATSFSVFCFLKVANFS. The Cytoplasmic portion of the chain corresponds to 116–128; that stretch reads NTIFFYLKIRVKK. A helical membrane pass occupies residues 129–149; that stretch reads VMTGTLIMFLLLLGLNIIVIN. Residues 150–183 lie on the Extracellular side of the membrane; that stretch reads ASKTILIPEYKVNMSNSLNLKNTQISMLFPFANT. Residue N162 is glycosylated (N-linked (GlcNAc...) asparagine). The chain crosses the membrane as a helical span at residues 184 to 204; that stretch reads LFGFIPFAVSLVTFLLLFFSL. Topologically, residues 205–236 are cytoplasmic; the sequence is WKHQRKMHHGAQGCRDSSTKAHIRVLQTLIAS. A helical transmembrane segment spans residues 237–257; sequence ILLYFVFFLSLVVKVWISLFL. Topologically, residues 258 to 261 are extracellular; that stretch reads ERML. The chain crosses the membrane as a helical span at residues 262 to 282; that stretch reads LLLITQAAKIAFPSLHPWVLI. The Cytoplasmic portion of the chain corresponds to 283 to 324; it reads LGNAKLRKASLSALQWLRCRHKDEHRRVQRPEVHSCGSSCMP.

Belongs to the G-protein coupled receptor T2R family.

It localises to the membrane. Its function is as follows. Putative taste receptor which may play a role in the perception of bitterness. The polypeptide is Taste receptor type 2 member 116 (Rattus norvegicus (Rat)).